The chain runs to 201 residues: Large ribosomal subunit protein uL4 (201 aa).

The segment at 44–68 (RAQKSRAEVSGSGRKPWRQKGTGRA) is disordered.

This sequence belongs to the universal ribosomal protein uL4 family. Part of the 50S ribosomal subunit.

Its function is as follows. One of the primary rRNA binding proteins, this protein initially binds near the 5'-end of the 23S rRNA. It is important during the early stages of 50S assembly. It makes multiple contacts with different domains of the 23S rRNA in the assembled 50S subunit and ribosome. Functionally, forms part of the polypeptide exit tunnel. In Buchnera aphidicola subsp. Acyrthosiphon pisum (strain APS) (Acyrthosiphon pisum symbiotic bacterium), this protein is Large ribosomal subunit protein uL4.